The following is a 367-amino-acid chain: UDP-N-acetylglucosamine--N-acetylmuramyl-(pentapeptide) pyrophosphoryl-undecaprenol N-acetylglucosamine transferase (367 aa).

UDP-N-acetyl-alpha-D-glucosamine is bound by residues T21–G23, N129, R170, S198, and Q295.

The protein belongs to the glycosyltransferase 28 family. MurG subfamily.

It localises to the cell inner membrane. It catalyses the reaction di-trans,octa-cis-undecaprenyl diphospho-N-acetyl-alpha-D-muramoyl-L-alanyl-D-glutamyl-meso-2,6-diaminopimeloyl-D-alanyl-D-alanine + UDP-N-acetyl-alpha-D-glucosamine = di-trans,octa-cis-undecaprenyl diphospho-[N-acetyl-alpha-D-glucosaminyl-(1-&gt;4)]-N-acetyl-alpha-D-muramoyl-L-alanyl-D-glutamyl-meso-2,6-diaminopimeloyl-D-alanyl-D-alanine + UDP + H(+). The protein operates within cell wall biogenesis; peptidoglycan biosynthesis. Cell wall formation. Catalyzes the transfer of a GlcNAc subunit on undecaprenyl-pyrophosphoryl-MurNAc-pentapeptide (lipid intermediate I) to form undecaprenyl-pyrophosphoryl-MurNAc-(pentapeptide)GlcNAc (lipid intermediate II). The sequence is that of UDP-N-acetylglucosamine--N-acetylmuramyl-(pentapeptide) pyrophosphoryl-undecaprenol N-acetylglucosamine transferase from Synechococcus sp. (strain JA-2-3B'a(2-13)) (Cyanobacteria bacterium Yellowstone B-Prime).